Consider the following 473-residue polypeptide: 3-isopropylmalate dehydratase large subunit (473 aa).

[4Fe-4S] cluster-binding residues include C353, C414, and C417.

The protein belongs to the aconitase/IPM isomerase family. LeuC type 1 subfamily. In terms of assembly, heterodimer of LeuC and LeuD. [4Fe-4S] cluster serves as cofactor.

It catalyses the reaction (2R,3S)-3-isopropylmalate = (2S)-2-isopropylmalate. It participates in amino-acid biosynthesis; L-leucine biosynthesis; L-leucine from 3-methyl-2-oxobutanoate: step 2/4. Its function is as follows. Catalyzes the isomerization between 2-isopropylmalate and 3-isopropylmalate, via the formation of 2-isopropylmaleate. The sequence is that of 3-isopropylmalate dehydratase large subunit from Cellvibrio japonicus (strain Ueda107) (Pseudomonas fluorescens subsp. cellulosa).